The chain runs to 1284 residues: MNFNNELSDLEKSFLFWTLRVQEYSYDTMHRIDFFLWELQVLNCFLHLQSFTFASECGMLDISQKMLEICKRFNTPPPHNAFAYWKELICKRLCAISIRPDDGFAYWKKVIWKTKQEFRAKYSFPKTLLADNKVDDDDTNPEFVMEFIDAVVGNLNVLVKINDPSSLLFVPGPKEQIEQVLKELKLLRFFVCFVSNKCIEPQYQHTTFYTHALIEASHIAMVVWLNLPIYGNRNQDLASSEVSCLLSNFMEMKIKSIQPGISRNNIYIDVLQALKSTIPQAQKKHAAESGIVEIPTHSLMVGLSDQMANLQEMLCLLKDNLIHLPILDLEFQPQDMDSVIIDAGLLIYSFYDMKGEKEDTTLEDINRELGFDLSRNIEPIKVMIYLVMQKAFQCNLPRIHGLGYVDFLLKNLKDFQGRYSDSFALHKTQIQVIQKEFESLQPFLKVVVEEPHNTFKRLSEDCAIQIIRKAHEVEYVVDACINKGIPHWRLKGWLQIIIEDITCIKEKIQEKNTVDDTMKTVIARTSSKLARTPRMNEEIVGFKDVIENLRNQLLNGTKGQDAISIHGMPGLGKTTLANTLYSDRSVVSQFDICAQCCVSQVYSYKDLLLALLCDAVGEDSDRRELPDNELADMLRKTLLPRRYLILVDDVWDNSAWDDLRGCFPDVNNRSRIILTTRHHEVAKYASVHSDPLHLRMFDKDESWKLLEKKVFGEQSCSPLLKDVGLRIAKMCGQLPLSIVLVAGILSEMEKEVECWEQVANNLGTHIHNDSRAIVNQSYHVLPCHLKSCFLYFGAFLEDEVIDISRLIRLWISESFIKSSEGRRLEDIAEGYLENLIGRNLVMVTQRADSDGKVKACRLHDVLLDFCKERAAEENFLLWINRDQSTNAVYSHKRHAHLAFTEMDSLVEWSASCSLVGSVLLKNYARRPLSSPAFSISHILLNFKFLKVLDLEHQVVIDSIPTELFYLRYLSARIEQNSIPSSISNLWNLETLILKHVSRCTVLLPSTVWDMVKLRHLHIPNFRPENEEALLENSAKLYDLETLSTPYFSRVEDAELMLRKTPNLRKLVCEVECLEYPPQYHVLNFPIRLEILKLYRSKAFNTIPFCISAPNLKYLKLSRSYMDSQYLSETADHLKNLEVLKLYFVKFADHREWKVSNGMFPQLKILKLEYLALMKWIVADDAFPNLEQLVLHECRHLMEIPSCFMDIPSLKYIEVENCNESVVKSAMNIQETQVEDYQNTNFKLVLIGIESISTDTKEKKLTVTRDVDADEVQLVVEKQRKRGML.

Positions 533-555 form a coiled coil; sequence PRMNEEIVGFKDVIENLRNQLLN. The 288-residue stretch at 534–821 folds into the NB-ARC domain; that stretch reads RMNEEIVGFK…SESFIKSSEG (288 aa). ATP is bound at residue 567-574; the sequence is GMPGLGKT. 8 LRR repeats span residues 942-966, 985-1010, 1013-1036, 1085-1107, 1108-1135, 1159-1181, 1182-1206, and 1219-1243; these read FKFL…LFYL, LWNL…VWDM, LRHL…SAKL, PIRL…FCIS, APNL…HLKN, FPQL…ADDA, FPNL…FMDI, and ESVV…NFKL. The region spanning 1217–1284 is the HMA domain; it reads CNESVVKSAM…VEKQRKRGML (68 aa).

The protein belongs to the disease resistance NB-LRR family.

It is found in the cytoplasm. Its subcellular location is the membrane. Confers resistance to late blight (Phytophthora infestans) races carrying the avirulence gene Avr1. Resistance proteins guard the plant against pathogens that contain an appropriate avirulence protein via an indirect interaction with this avirulence protein. That triggers a defense system including the hypersensitive response, which restricts the pathogen growth. The polypeptide is Putative late blight resistance protein homolog R1B-16 (R1B-16) (Solanum demissum (Wild potato)).